The following is a 241-amino-acid chain: Acetoacetyl-CoA reductase (241 aa).

NADP(+) is bound by residues 12–14 (RGI) and 82–86 (NAGIT). Substrate contacts are provided by residues aspartate 88 and 141 to 144 (QMGQ). The active-site Proton acceptor is tyrosine 147. 177–180 (PGYI) serves as a coordination point for NADP(+). 178–179 (GY) is a binding site for substrate.

It belongs to the short-chain dehydrogenases/reductases (SDR) family.

It is found in the cytoplasm. The enzyme catalyses a (3R)-3-hydroxyacyl-CoA + NADP(+) = a 3-oxoacyl-CoA + NADPH + H(+). It participates in biopolymer metabolism; poly-(R)-3-hydroxybutanoate biosynthesis. The sequence is that of Acetoacetyl-CoA reductase from Shinella zoogloeoides (Crabtreella saccharophila).